Consider the following 191-residue polypeptide: Cell division protein SepF (191 aa).

Polar residues predominate over residues 156–167; the sequence is EEASPSNMSNKG. Residues 156-191 are disordered; it reads EEASPSNMSNKGNDLISKETSPAPEPAWGETVATAL.

Belongs to the SepF family. In terms of assembly, homodimer. Interacts with FtsZ.

It is found in the cytoplasm. Its function is as follows. Cell division protein that is part of the divisome complex and is recruited early to the Z-ring. Probably stimulates Z-ring formation, perhaps through the cross-linking of FtsZ protofilaments. Its function overlaps with FtsA. This is Cell division protein SepF from Prochlorococcus marinus (strain NATL1A).